Here is a 342-residue protein sequence, read N- to C-terminus: Phosphate acyltransferase (342 aa).

It belongs to the PlsX family. In terms of assembly, homodimer. Probably interacts with PlsY.

The protein resides in the cytoplasm. It carries out the reaction a fatty acyl-[ACP] + phosphate = an acyl phosphate + holo-[ACP]. It participates in lipid metabolism; phospholipid metabolism. Functionally, catalyzes the reversible formation of acyl-phosphate (acyl-PO(4)) from acyl-[acyl-carrier-protein] (acyl-ACP). This enzyme utilizes acyl-ACP as fatty acyl donor, but not acyl-CoA. The protein is Phosphate acyltransferase of Shewanella woodyi (strain ATCC 51908 / MS32).